Here is a 134-residue protein sequence, read N- to C-terminus: Small ribosomal subunit protein uS11 (134 aa).

It belongs to the universal ribosomal protein uS11 family. In terms of assembly, part of the 30S ribosomal subunit. Interacts with proteins S7 and S18. Binds to IF-3.

Located on the platform of the 30S subunit, it bridges several disparate RNA helices of the 16S rRNA. Forms part of the Shine-Dalgarno cleft in the 70S ribosome. In Corynebacterium glutamicum (strain R), this protein is Small ribosomal subunit protein uS11.